A 222-amino-acid polypeptide reads, in one-letter code: Eukaryotic translation initiation factor 3 subunit K (222 aa).

In terms of domain architecture, PCI spans 46-208; the sequence is YDLEANLAVL…KIKTKNITEK (163 aa).

This sequence belongs to the eIF-3 subunit K family. As to quaternary structure, component of the eukaryotic translation initiation factor 3 (eIF-3) complex. The eIF-3 complex interacts with pix.

The protein resides in the cytoplasm. Component of the eukaryotic translation initiation factor 3 (eIF-3) complex, which is involved in protein synthesis of a specialized repertoire of mRNAs and, together with other initiation factors, stimulates binding of mRNA and methionyl-tRNAi to the 40S ribosome. The eIF-3 complex specifically targets and initiates translation of a subset of mRNAs involved in cell proliferation. This Drosophila mojavensis (Fruit fly) protein is Eukaryotic translation initiation factor 3 subunit K.